Here is a 435-residue protein sequence, read N- to C-terminus: GTPase Obg (435 aa).

The Obg domain occupies 1 to 159 (MAFIDKCKIV…VEVLLELKTI (159 aa)). An OBG-type G domain is found at 160-329 (ADIGIIGLPN…MLDDVIKIYF (170 aa)). GTP contacts are provided by residues 166 to 173 (GLPNAGKS), 191 to 195 (FTTLN), 212 to 215 (DIPG), 282 to 285 (NKID), and 310 to 312 (SAL). Positions 173 and 193 each coordinate Mg(2+). An OCT domain is found at 357 to 435 (KSKELDKTIE…IYDITLEFEE (79 aa)).

This sequence belongs to the TRAFAC class OBG-HflX-like GTPase superfamily. OBG GTPase family. Monomer. Requires Mg(2+) as cofactor.

Its subcellular location is the cytoplasm. In terms of biological role, an essential GTPase which binds GTP, GDP and possibly (p)ppGpp with moderate affinity, with high nucleotide exchange rates and a fairly low GTP hydrolysis rate. Plays a role in control of the cell cycle, stress response, ribosome biogenesis and in those bacteria that undergo differentiation, in morphogenesis control. In Ureaplasma parvum serovar 3 (strain ATCC 27815 / 27 / NCTC 11736), this protein is GTPase Obg.